A 326-amino-acid polypeptide reads, in one-letter code: 4-hydroxythreonine-4-phosphate dehydrogenase (326 aa).

Substrate-binding residues include His133 and Thr134. A divalent metal cation contacts are provided by His163, His208, and His263. Lys271, Asn280, and Arg289 together coordinate substrate.

This sequence belongs to the PdxA family. Homodimer. It depends on Zn(2+) as a cofactor. Mg(2+) is required as a cofactor. Requires Co(2+) as cofactor.

It localises to the cytoplasm. It catalyses the reaction 4-(phosphooxy)-L-threonine + NAD(+) = 3-amino-2-oxopropyl phosphate + CO2 + NADH. It participates in cofactor biosynthesis; pyridoxine 5'-phosphate biosynthesis; pyridoxine 5'-phosphate from D-erythrose 4-phosphate: step 4/5. In terms of biological role, catalyzes the NAD(P)-dependent oxidation of 4-(phosphooxy)-L-threonine (HTP) into 2-amino-3-oxo-4-(phosphooxy)butyric acid which spontaneously decarboxylates to form 3-amino-2-oxopropyl phosphate (AHAP). This Pseudoalteromonas atlantica (strain T6c / ATCC BAA-1087) protein is 4-hydroxythreonine-4-phosphate dehydrogenase.